Reading from the N-terminus, the 293-residue chain is Cell division protein FtsQ (293 aa).

The Cytoplasmic segment spans residues 1–29 (MSQVRSKSQQGKRQAKPQEVVPATILTEQ). Residues 30-52 (LSTYAFGTVTAGAVMVAVAAWMG) form a helical membrane-spanning segment. The Periplasmic segment spans residues 53-293 (GSLASIDERI…SQIDDKSGGA (241 aa)). Residues 75–144 (FTVTKISIEG…NDIWILAENR (70 aa)) form the POTRA domain.

This sequence belongs to the FtsQ/DivIB family. FtsQ subfamily.

Its subcellular location is the cell inner membrane. In terms of biological role, essential cell division protein. In Hirschia baltica (strain ATCC 49814 / DSM 5838 / IFAM 1418), this protein is Cell division protein FtsQ.